The following is a 321-amino-acid chain: uncharacterized protein (321 aa).

Residues 1–5 are Cytoplasmic-facing; it reads MKQQA. A helical transmembrane segment spans residues 6–26; that stretch reads GIGILLALTTAICWGALPIAM. An EamA 1 domain is found at 17–144; it reads ICWGALPIAM…LLSGLVMFFN (128 aa). Residues 27–35 lie on the Periplasmic side of the membrane; that stretch reads KQVLEVMEP. The chain crosses the membrane as a helical span at residues 36–56; the sequence is PTIVFYRFLMASIGLGAILAV. At 57–70 the chain is on the cytoplasmic side; it reads KKRLPPLRVFRKPR. The helical transmembrane segment at 71-91 threads the bilayer; the sequence is WLILLAVATAGLFGNFILFSS. Residues 92–99 lie on the Periplasmic side of the membrane; that stretch reads SLQYLSPT. A helical transmembrane segment spans residues 100–120; it reads ASQVIGQLSPVGMMVASVFIL. At 121–130 the chain is on the cytoplasmic side; it reads KEKMRSTQVV. Residues 131–151 form a helical membrane-spanning segment; that stretch reads GALMLLSGLVMFFNTSLVEIF. Residues 152–156 lie on the Periplasmic side of the membrane; that stretch reads TKLTD. Residues 157–177 traverse the membrane as a helical segment; the sequence is YTWGVIFGVGAATVWVSYGVA. Residues 169–292 enclose the EamA 2 domain; sequence TVWVSYGVAQ…GYLGAFVVVA (124 aa). Topologically, residues 178-190 are cytoplasmic; the sequence is QKVLLRRLASPQI. Residues 191-211 form a helical membrane-spanning segment; it reads LFLLYTLCTIALFPLAKPGVI. The Periplasmic segment spans residues 212–216; that stretch reads AQLSH. Residues 217-237 form a helical membrane-spanning segment; sequence WQLACLIFCGLNTLVGYGALA. The Cytoplasmic segment spans residues 238-249; that stretch reads EAMARWQAAQVS. Residues 250–270 form a helical membrane-spanning segment; that stretch reads AIITLTPLFTLFFSDLLSLAW. At 271–278 the chain is on the periplasmic side; it reads PDFFARPM. The chain crosses the membrane as a helical span at residues 279-299; it reads LNLLGYLGAFVVVAGAMYSAI. Topologically, residues 300-321 are cytoplasmic; that stretch reads GHRIWGGLRKHTTVVSQPRAGE.

Belongs to the EamA transporter family.

It localises to the cell inner membrane. This is an uncharacterized protein from Escherichia coli O157:H7.